Here is a 338-residue protein sequence, read N- to C-terminus: MSETRSAKPVRLRLACDACTTAKVRCSRTHPCERCEDNGQAKECCYSASRRHGKRARQRQSAQDSSSSSLTTQFTNAWDDYSTYSAGDLEMLDSWASRSVDVTVDFDDGNGISWVDPWKSLGFVSDTTASQSSGMVSPDLSLSTGPILSIKAPEPTAMHSHDCEALALKVLRSLQCNTNTDQSICKSSPIPQKQTFSTPSIDTVLSVNKAALTNLIPLLKCHCARNPHIAMLHSAILSKVIFWYRVAVTARYHADGVELRPMKIQLGMLDLDDEDQATLQRTVVLRELRKAEKVMETFDSFAGGDDGGLNWHVVAVRNMREELQGIIQKIKKCQGELM.

Residues 16-44 (CDACTTAKVRCSRTHPCERCEDNGQAKEC) constitute a DNA-binding region (zn(2)-C6 fungal-type).

Its subcellular location is the nucleus. In terms of biological role, transcription factor that regulates the expression of the gene cluster that mediates the biosynthesis of fusarubins, highly pigmented naphthoquinones responsible for the coloration of the fruiting bodies. The chain is Fusarubin cluster-specific transcription factor fsr6 from Gibberella fujikuroi (strain CBS 195.34 / IMI 58289 / NRRL A-6831) (Bakanae and foot rot disease fungus).